A 538-amino-acid chain; its full sequence is Sodium/hydrogen exchanger 1 (538 aa).

Topologically, residues M1–S19 are cytoplasmic. A helical transmembrane segment spans residues V20–L40. At E41–W45 the chain is on the vacuolar side. Residues M46–I66 form a helical membrane-spanning segment. The Cytoplasmic segment spans residues S67–H73. An intramembrane region (helical) is located at residues L74–A94. Topologically, residues G95–N106 are cytoplasmic. Residues F107 to L127 form a helical membrane-spanning segment. The Vacuolar segment spans residues G128–Y146. Intramembrane regions (helical) lie at residues L147–N166 and L172–F192. Residues N193 to L216 lie on the Vacuolar side of the membrane. The chain crosses the membrane as a helical span at residues Y217–I237. Over K238–Y262 the chain is Cytoplasmic. A helical transmembrane segment spans residues M263–M283. Residues S284 to T302 are Vacuolar-facing. An N-linked (GlcNAc...) asparagine glycan is attached at N290. Residues F303–L323 traverse the membrane as a helical segment. The Cytoplasmic segment spans residues D324–S342. The chain crosses the membrane as a helical span at residues S343–L363. Topologically, residues S364–N378 are vacuolar. N370 is a glycosylation site (N-linked (GlcNAc...) asparagine). A helical transmembrane segment spans residues M379–Y399. Topologically, residues N400–N413 are cytoplasmic. The helical transmembrane segment at A414–L434 threads the bilayer. Residues T435–A538 lie on the Vacuolar side of the membrane. N447 carries an N-linked (GlcNAc...) asparagine glycan. The tract at residues R496–G518 is interaction with CML18/CAM15.

This sequence belongs to the monovalent cation:proton antiporter 1 (CPA1) transporter (TC 2.A.36) family. In terms of assembly, calcium and pH-dependent interaction with CML18/CAM15 (increases when pH decreases, better at pH 5.5 than at pH 7.5). In terms of tissue distribution, ubiquitous, with higher levels around vascular tissues and guard cells.

The protein localises to the vacuole membrane. It localises to the endoplasmic reticulum membrane. It is found in the golgi apparatus membrane. It catalyses the reaction Na(+)(in) + H(+)(out) = Na(+)(out) + H(+)(in). The enzyme catalyses K(+)(in) + H(+)(out) = K(+)(out) + H(+)(in). Acts in low affinity electroneutral exchange of protons for cations such as Na(+) or K(+) across membranes. Can also exchange Li(+) and Cs(+) with a lower affinity. Involved in vacuolar ion compartmentalization necessary for cell volume regulation and cytoplasmic Na(+) detoxification. Required during leaves expansion, probably to stimulate epidermal cell expansion. Confers competence to grow in high salinity conditions. This chain is Sodium/hydrogen exchanger 1 (NHX1), found in Arabidopsis thaliana (Mouse-ear cress).